A 127-amino-acid chain; its full sequence is Fatty acid binding protein 1-A, liver (127 aa).

Belongs to the calycin superfamily. Fatty-acid binding protein (FABP) family. As to expression, in adults, weakly expressed in the intestine.

The protein localises to the cytoplasm. Its function is as follows. Binds free fatty acids and their coenzyme A derivatives, bilirubin, and some other small molecules in the cytoplasm. May be involved in intracellular lipid transport. The polypeptide is Fatty acid binding protein 1-A, liver (Danio rerio (Zebrafish)).